Here is a 439-residue protein sequence, read N- to C-terminus: Eukaryotic translation initiation factor 2 subunit gamma (439 aa).

Positions 11-215 constitute a tr-type G domain; the sequence is QATLNIGTIG…FIVNYIPEPV (205 aa). A G1 region spans residues 20–27; that stretch reads GHVAHGKS. 23 to 28 is a binding site for GTP; that stretch reads AHGKST. Residues 48 to 52 form a G2 region; the sequence is NITIK. Positions 103 to 106 are G3; sequence DCPG. GTP contacts are provided by residues 159–162 and 193–195; these read NKID and AAQ. The segment at 159 to 162 is G4; that stretch reads NKID. Positions 193 to 195 are G5; that stretch reads AAQ. The interval 415-427 is interacts with CDC123; sequence GEIKDGTCIEPEY.

This sequence belongs to the TRAFAC class translation factor GTPase superfamily. Classic translation factor GTPase family. EIF2G subfamily. In terms of assembly, eukaryotic translation initiation factor 2 eIF2 is a heterotrimeric complex composed of an alpha, a beta and a gamma subunit. The factors eIF-1, eIF-2, eIF-3, TIF5/eIF-5 and methionyl-tRNAi form a multifactor complex (MFC) that may bind to the 40S ribosome.

Its subcellular location is the cytoplasm. It is found in the cytosol. It carries out the reaction GTP + H2O = GDP + phosphate + H(+). As a subunit of eukaryotic initiation factor 2 eIF2, involved in the early steps of protein synthesis. In the presence of GTP, eIF-2 forms a ternary complex with initiator tRNA Met-tRNAi and then recruits the 40S ribosomal complex and initiation factors eIF-1, eIF-1A and eIF-3 to form the 43S pre-initiation complex (43S PIC), a step that determines the rate of protein translation. The 43S PIC binds to mRNA and scans downstream to the initiation codon, where it forms a 48S initiation complex by codon-anticodon base pairing. This leads to the displacement of eIF-1 to allow GTPase-activating protein (GAP) eIF-5-mediated hydrolysis of eIF2-bound GTP. Hydrolysis of GTP and release of Pi, which makes GTP hydrolysis irreversible, causes the release of the eIF-2-GDP binary complex from the 40S subunit, an event that is essential for the subsequent joining of the 60S ribosomal subunit to form an elongation-competent 80S ribosome. In order for eIF-2 to recycle and catalyze another round of initiation, the GDP bound to eIF-2 must be exchanged with GTP by way of a reaction catalyzed by GDP-GTP exchange factor (GEF) eIF-2B. The protein is Eukaryotic translation initiation factor 2 subunit gamma of Encephalitozoon cuniculi (strain GB-M1) (Microsporidian parasite).